Consider the following 533-residue polypeptide: Chromosomal replication initiator protein DnaA (533 aa).

Residues 1-72 (MNDFWQHCSA…DLARDFWNAP (72 aa)) are domain I, interacts with DnaA modulators. The segment at 72–196 (PIEVQFVLDP…EAADSMYERS (125 aa)) is domain II. Residues 83–110 (AGQRSPAGATPLAPRAPLPSANPAPVGP) form a disordered region. Positions 96–110 (PRAPLPSANPAPVGP) are enriched in pro residues. Residues 197–413 (KLNPVLTFDN…GALRKILAYS (217 aa)) are domain III, AAA+ region. Positions 241, 243, 244, and 245 each coordinate ATP. The interval 414–533 (KFHGREITIE…LHVLEQTLKG (120 aa)) is domain IV, binds dsDNA.

The protein belongs to the DnaA family. Oligomerizes as a right-handed, spiral filament on DNA at oriC.

The protein localises to the cytoplasm. Functionally, plays an essential role in the initiation and regulation of chromosomal replication. ATP-DnaA binds to the origin of replication (oriC) to initiate formation of the DNA replication initiation complex once per cell cycle. Binds the DnaA box (a 9 base pair repeat at the origin) and separates the double-stranded (ds)DNA. Forms a right-handed helical filament on oriC DNA; dsDNA binds to the exterior of the filament while single-stranded (ss)DNA is stabiized in the filament's interior. The ATP-DnaA-oriC complex binds and stabilizes one strand of the AT-rich DNA unwinding element (DUE), permitting loading of DNA polymerase. After initiation quickly degrades to an ADP-DnaA complex that is not apt for DNA replication. Binds acidic phospholipids. The sequence is that of Chromosomal replication initiator protein DnaA from Burkholderia mallei (strain NCTC 10247).